A 1479-amino-acid polypeptide reads, in one-letter code: C-type mannose receptor 2 (1479 aa).

A signal peptide spans 1–30 (MGPGRPAPAPWPRHLLRCVLLLGCLHLGRP). Over 31–1414 (GAPGDAALPE…PSALPENPAA (1384 aa)) the chain is Extracellular. The 127-residue stretch at 41-167 (PNVFLIFSHG…WRIYGSEEDL (127 aa)) folds into the Ricin B-type lectin domain. Residues cysteine 54 and cysteine 68 are joined by a disulfide bond. An N-linked (GlcNAc...) (complex) asparagine glycan is attached at asparagine 69. Cysteines 93 and 112 form a disulfide. Asparagine 140 carries an N-linked (GlcNAc...) asparagine glycan. In terms of domain architecture, Fibronectin type-II spans 182 to 230 (SHGKPCTIPFKYDNQWFHGCTSTGREDGHLWCATTQDYGKDERWGFCPI). 4 disulfides stabilise this stretch: cysteine 187/cysteine 213, cysteine 201/cysteine 228, cysteine 266/cysteine 359, and cysteine 335/cysteine 351. One can recognise a C-type lectin 1 domain in the interval 244–360 (LTDSCYQFNF…CSIALPYVCK (117 aa)). Asparagine 364 carries N-linked (GlcNAc...) asparagine glycosylation. 4 C-type lectin domains span residues 389-505 (FQGH…SICK), 528-644 (HSPS…RYIC), 678-809 (KLRY…WICK), and 832-951 (FQEA…YICK). Cystine bridges form between cysteine 410/cysteine 504 and cysteine 481/cysteine 496. Residue asparagine 588 is glycosylated (N-linked (GlcNAc...) asparagine). Disulfide bonds link cysteine 618–cysteine 635, cysteine 704–cysteine 808, cysteine 785–cysteine 800, cysteine 853–cysteine 950, and cysteine 927–cysteine 942. N-linked (GlcNAc...) asparagine glycans are attached at residues asparagine 954 and asparagine 1029. C-type lectin domains are found at residues 979 to 1107 (FLNK…GFIC), 1132 to 1243 (YLNG…GAVC), and 1273 to 1393 (FREH…GVVC). Cysteine 1078 and cysteine 1098 are disulfide-bonded. A Glycyl lysine isopeptide (Lys-Gly) (interchain with G-Cter in SUMO1) cross-link involves residue lysine 1142. Cysteine 1220 and cysteine 1234 are joined by a disulfide. N-linked (GlcNAc...) asparagine glycosylation occurs at asparagine 1350. Residues cysteine 1369 and cysteine 1384 are joined by a disulfide bond. The chain crosses the membrane as a helical span at residues 1415 to 1435 (LVVVLMAVLLLLALLTAALIL). The Cytoplasmic segment spans residues 1436 to 1479 (YRRRQSIERGAFEGARYSRSSSSPTEATEKNILVSDMEMNEQQE). Residues 1450 to 1479 (ARYSRSSSSPTEATEKNILVSDMEMNEQQE) are disordered.

As to quaternary structure, interacts with C-terminal region of type I collagen/COL1A1. Interacts directly with PLAUR/UPAR and PLAU/pro-UPA to form a tri-molecular complex. Interacts with collagen V. In terms of processing, N-glycosylated. Ubiquitous with low expression in brain, placenta, lung, kidney, pancreas, spleen, thymus and colon. Expressed in endothelial cells, fibroblasts and macrophages. Highly expressed in fetal lung and kidney.

The protein localises to the membrane. May play a role as endocytotic lectin receptor displaying calcium-dependent lectin activity. Internalizes glycosylated ligands from the extracellular space for release in an endosomal compartment via clathrin-mediated endocytosis. May be involved in plasminogen activation system controlling the extracellular level of PLAUR/PLAU, and thus may regulate protease activity at the cell surface. May contribute to cellular uptake, remodeling and degradation of extracellular collagen matrices. May play a role during cancer progression as well as in other chronic tissue destructive diseases acting on collagen turnover. May participate in remodeling of extracellular matrix cooperating with the matrix metalloproteinases (MMPs). This Homo sapiens (Human) protein is C-type mannose receptor 2 (MRC2).